Consider the following 262-residue polypeptide: uncharacterized protein (262 aa).

The stretch at 41 to 118 (ELQKNEKIDK…EEKAEDFINK (78 aa)) forms a coiled coil.

This is an uncharacterized protein from Plasmodium falciparum (isolate 3D7).